The chain runs to 184 residues: Oligoribonuclease (184 aa).

The Exonuclease domain occupies 7–170; sequence LIWIDLEMTG…DDIYESIEEL (164 aa). Residue Tyr128 is part of the active site.

Belongs to the oligoribonuclease family.

The protein resides in the cytoplasm. Functionally, 3'-to-5' exoribonuclease specific for small oligoribonucleotides. The polypeptide is Oligoribonuclease (Hydrogenovibrio crunogenus (strain DSM 25203 / XCL-2) (Thiomicrospira crunogena)).